Consider the following 366-residue polypeptide: tRNA(Met) cytidine acetate ligase (366 aa).

Residues 7–20 (IAEF…HQYL), G101, N145, and R170 contribute to the ATP site.

It belongs to the TmcAL family.

It localises to the cytoplasm. It carries out the reaction cytidine(34) in elongator tRNA(Met) + acetate + ATP = N(4)-acetylcytidine(34) in elongator tRNA(Met) + AMP + diphosphate. Functionally, catalyzes the formation of N(4)-acetylcytidine (ac(4)C) at the wobble position of elongator tRNA(Met), using acetate and ATP as substrates. First activates an acetate ion to form acetyladenylate (Ac-AMP) and then transfers the acetyl group to tRNA to form ac(4)C34. The sequence is that of tRNA(Met) cytidine acetate ligase from Pediococcus pentosaceus (strain ATCC 25745 / CCUG 21536 / LMG 10740 / 183-1w).